The primary structure comprises 174 residues: CD164 sialomucin-like 2 protein (174 aa).

The N-terminal stretch at 1–29 (MEAPGPRALRTALCGGCCCLLLCAQLAVA) is a signal peptide. Over 30 to 141 (GKGARGFGRG…AHSPGFDGAS (112 aa)) the chain is Extracellular. N-linked (GlcNAc...) asparagine glycans are attached at residues N71 and N103. Residues 142–162 (FIGGVVLVLSLQAVAFFVLHF) form a helical membrane-spanning segment. Topologically, residues 163 to 174 (LKAKDSTYQTLI) are cytoplasmic.

This sequence belongs to the CD164 family.

It is found in the membrane. This is CD164 sialomucin-like 2 protein (CD164L2) from Homo sapiens (Human).